The chain runs to 123 residues: UPF0102 protein APJL_1381 (123 aa).

The protein belongs to the UPF0102 family.

The protein is UPF0102 protein APJL_1381 of Actinobacillus pleuropneumoniae serotype 3 (strain JL03).